The chain runs to 1216 residues: DNA-directed RNA polymerase subunit beta (1216 aa).

Residues 1185–1216 (EEKQELPSQEYESLNLDQELKTASENVSESEF) are disordered. Residues 1190-1216 (LPSQEYESLNLDQELKTASENVSESEF) are compositionally biased toward polar residues.

It belongs to the RNA polymerase beta chain family. In terms of assembly, the RNAP catalytic core consists of 2 alpha, 1 beta, 1 beta' and 1 omega subunit. When a sigma factor is associated with the core the holoenzyme is formed, which can initiate transcription.

The catalysed reaction is RNA(n) + a ribonucleoside 5'-triphosphate = RNA(n+1) + diphosphate. DNA-dependent RNA polymerase catalyzes the transcription of DNA into RNA using the four ribonucleoside triphosphates as substrates. The polypeptide is DNA-directed RNA polymerase subunit beta (Mycoplasmopsis pulmonis (strain UAB CTIP) (Mycoplasma pulmonis)).